A 296-amino-acid polypeptide reads, in one-letter code: MNDYLVKSIDKTKNLRLLTITAKGVVSEAQKRHDLWSASSAVLGRTLVGSLLLAGAELTDKEELTVRLLGNGPVGPAIVTATADLKVKGYVKNPHIALPPKENGHIDVKKAVGQGWFEVTKDLGLKEPYTGQVPIVSGEIAEDFAYYLTKSEQIPSAVGLSVFVNPNNSIGEAGGFMLQALPGASDALIDKTIKRINELPALSTSFLDGMTPEDLARKILGTDCKILEKDDVAFSCDCSKEKYAGILETLKSSQLKDMINEDHGAELICNFCGNKYHYTEDELKEILAKKKDDKDY.

2 cysteine pairs are disulfide-bonded: cysteine 236/cysteine 238 and cysteine 269/cysteine 272.

Belongs to the HSP33 family. In terms of processing, under oxidizing conditions two disulfide bonds are formed involving the reactive cysteines. Under reducing conditions zinc is bound to the reactive cysteines and the protein is inactive.

Its subcellular location is the cytoplasm. In terms of biological role, redox regulated molecular chaperone. Protects both thermally unfolding and oxidatively damaged proteins from irreversible aggregation. Plays an important role in the bacterial defense system toward oxidative stress. The protein is 33 kDa chaperonin of Lactobacillus acidophilus (strain ATCC 700396 / NCK56 / N2 / NCFM).